We begin with the raw amino-acid sequence, 199 residues long: Homeobox protein ceh-19 (199 aa).

The disordered stretch occupies residues 1-42 (MAFNIESLLEKKSNPVEEGNDFEEENDSEKNGEEDEEEEEKN). The segment covering 18-40 (EGNDFEEENDSEKNGEEDEEEEE) has biased composition (acidic residues). A DNA-binding region (homeobox) is located at residues 94–153 (ERKPRQAYSARQLDRLETEFQTDKYLSVNKRIQLSQTLNLTETQIKTWFQNRRTKWKKQL).

The protein localises to the nucleus. Probable transcription factor. Required for MC motor neuron differentiation and function, including role in modulating pharyngeal pumping. Regulates gene expression of FMRFamide-like neuropeptide flp-2 in MC motor neurons. May act downstream of transcription factor pha-4. This Caenorhabditis elegans protein is Homeobox protein ceh-19 (ceh-19).